Here is a 488-residue protein sequence, read N- to C-terminus: UDP-N-acetylmuramoyl-L-alanyl-D-glutamate--2,6-diaminopimelate ligase (488 aa).

Residues L24, S26, and 41-43 (HQV) each bind UDP-N-acetyl-alpha-D-muramoyl-L-alanyl-D-glutamate. 113-119 (GTNGKTT) contributes to the ATP binding site. UDP-N-acetyl-alpha-D-muramoyl-L-alanyl-D-glutamate is bound by residues N154, 155–156 (TT), S182, Q188, and R190. N6-carboxylysine is present on K222. Residues R386, 410-413 (DNPR), G461, and E465 each bind meso-2,6-diaminopimelate. A Meso-diaminopimelate recognition motif motif is present at residues 410-413 (DNPR).

Belongs to the MurCDEF family. MurE subfamily. Requires Mg(2+) as cofactor. Post-translationally, carboxylation is probably crucial for Mg(2+) binding and, consequently, for the gamma-phosphate positioning of ATP.

It localises to the cytoplasm. It catalyses the reaction UDP-N-acetyl-alpha-D-muramoyl-L-alanyl-D-glutamate + meso-2,6-diaminopimelate + ATP = UDP-N-acetyl-alpha-D-muramoyl-L-alanyl-gamma-D-glutamyl-meso-2,6-diaminopimelate + ADP + phosphate + H(+). It functions in the pathway cell wall biogenesis; peptidoglycan biosynthesis. In terms of biological role, catalyzes the addition of meso-diaminopimelic acid to the nucleotide precursor UDP-N-acetylmuramoyl-L-alanyl-D-glutamate (UMAG) in the biosynthesis of bacterial cell-wall peptidoglycan. The polypeptide is UDP-N-acetylmuramoyl-L-alanyl-D-glutamate--2,6-diaminopimelate ligase (Haemophilus influenzae (strain PittGG)).